A 491-amino-acid chain; its full sequence is Ketol-acid reductoisomerase (NADP(+)) (491 aa).

The KARI N-terminal Rossmann domain maps to 15–208; it reads AQLGKCRFMG…GGHRAGVLES (194 aa). Residues 45–48, R68, R76, S78, and 108–110 contribute to the NADP(+) site; these read CGAQ and DKQ. H132 is a catalytic residue. An NADP(+)-binding site is contributed by G158. 2 KARI C-terminal knotted domains span residues 209–344 and 345–484; these read SFVA…TAPQ and YEGK…MTDM. Mg(2+) is bound by residues D217, E221, E389, and E393. Residue S414 coordinates substrate.

This sequence belongs to the ketol-acid reductoisomerase family. The cofactor is Mg(2+).

The catalysed reaction is (2R)-2,3-dihydroxy-3-methylbutanoate + NADP(+) = (2S)-2-acetolactate + NADPH + H(+). The enzyme catalyses (2R,3R)-2,3-dihydroxy-3-methylpentanoate + NADP(+) = (S)-2-ethyl-2-hydroxy-3-oxobutanoate + NADPH + H(+). The protein operates within amino-acid biosynthesis; L-isoleucine biosynthesis; L-isoleucine from 2-oxobutanoate: step 2/4. It participates in amino-acid biosynthesis; L-valine biosynthesis; L-valine from pyruvate: step 2/4. Its function is as follows. Involved in the biosynthesis of branched-chain amino acids (BCAA). Catalyzes an alkyl-migration followed by a ketol-acid reduction of (S)-2-acetolactate (S2AL) to yield (R)-2,3-dihydroxy-isovalerate. In the isomerase reaction, S2AL is rearranged via a Mg-dependent methyl migration to produce 3-hydroxy-3-methyl-2-ketobutyrate (HMKB). In the reductase reaction, this 2-ketoacid undergoes a metal-dependent reduction by NADPH to yield (R)-2,3-dihydroxy-isovalerate. The sequence is that of Ketol-acid reductoisomerase (NADP(+)) from Escherichia coli O6:K15:H31 (strain 536 / UPEC).